The sequence spans 697 residues: Probable translocation protein y4yR (697 aa).

Transmembrane regions (helical) follow at residues 20–40, 42–62, 67–87, 107–127, 200–220, 235–255, 293–313, and 372–392; these read VALM…VMAV, ALIG…LYVS, FSSL…LTVA, SFVI…VTMV, SIAG…IGLL, LLTI…SITA, VAMG…AAVF, and IARI…PIPV. The interval 675–697 is disordered; it reads IRLPPSNGTSGEPRSIRPSATTG. The span at 680–697 shows a compositional bias: polar residues; it reads SNGTSGEPRSIRPSATTG.

This sequence belongs to the FHIPEP (flagella/HR/invasion proteins export pore) family.

It is found in the cell inner membrane. Could be involved in the secretion of an unknown factor. This Sinorhizobium fredii (strain NBRC 101917 / NGR234) protein is Probable translocation protein y4yR.